Here is a 579-residue protein sequence, read N- to C-terminus: Glucans biosynthesis protein G (579 aa).

Residues 1–37 form the signal peptide; the sequence is MIVSPHKASRIPGNRLRKALMASAALVGLMSAGQLWA. Positions 516 to 579 are disordered; that stretch reads AKPAEEAKHD…TWSYQLPADE (64 aa). A compositionally biased stretch (basic and acidic residues) spans 517–539; that stretch reads KPAEEAKHDKTAAKHGKAEKAAK.

This sequence belongs to the OpgD/OpgG family.

It is found in the periplasm. It participates in glycan metabolism; osmoregulated periplasmic glucan (OPG) biosynthesis. Functionally, involved in the biosynthesis of osmoregulated periplasmic glucans (OPGs). This Pseudomonas putida (strain W619) protein is Glucans biosynthesis protein G.